The sequence spans 696 residues: DNA ligase (696 aa).

NAD(+) is bound by residues 36–40 (DAEYD), 85–86 (SL), and Glu-123. The active-site N6-AMP-lysine intermediate is Lys-125. 4 residues coordinate NAD(+): Arg-146, Glu-181, Lys-319, and Lys-343. Positions 437, 440, 455, and 461 each coordinate Zn(2+). The region spanning 618–696 (PEGTSLAGKT…EDGLKALLGL (79 aa)) is the BRCT domain.

The protein belongs to the NAD-dependent DNA ligase family. LigA subfamily. Mg(2+) is required as a cofactor. Requires Mn(2+) as cofactor.

It carries out the reaction NAD(+) + (deoxyribonucleotide)n-3'-hydroxyl + 5'-phospho-(deoxyribonucleotide)m = (deoxyribonucleotide)n+m + AMP + beta-nicotinamide D-nucleotide.. Its function is as follows. DNA ligase that catalyzes the formation of phosphodiester linkages between 5'-phosphoryl and 3'-hydroxyl groups in double-stranded DNA using NAD as a coenzyme and as the energy source for the reaction. It is essential for DNA replication and repair of damaged DNA. In Bordetella parapertussis (strain 12822 / ATCC BAA-587 / NCTC 13253), this protein is DNA ligase.